The primary structure comprises 319 residues: MAAKGGTVKAASGFNAAEDAQTLRKAMKGLGTDEDAIISVLAYRSTAQRQEIRTAYKSTIGRDLLDDLKSELSGNFEQVILGMMTPTVLYDVQELRRAMKGAGTDEGCLIEILASRTPEEIRRINQTYQLQYGRSLEDDIRSDTSFMFQRVLVSLSAGGRDEGNYLDDALVRQDAQDLYEAGEKKWGTDEVKFLTVLCSRNRNHLLHVFDEYKRISQKDIEQSIKSETSGSFEDALLAIVKCMRNKSAYFAERLYKSMKGLGTDDNTLIRVMVSRAEIDMMDIRANFKRLYGKSLYSFIKGDTSGDYRKVLLILCGGDD.

The residue at position 2 (Ala-2) is an N-acetylalanine. Thr-7 bears the Phosphothreonine; by PKC mark. Ser-12 is subject to Phosphoserine. Annexin repeat units lie at residues 14 to 85 (FNAA…GMMT), 86 to 157 (PTVL…SLSA), 169 to 241 (ALVR…AIVK), and 245 to 316 (NKSA…ILCG). Lys-213, Lys-293, and Lys-300 each carry N6-acetyllysine.

It belongs to the annexin family. Monomer.

The protein localises to the zymogen granule membrane. Functionally, calcium/phospholipid-binding protein which promotes membrane fusion and is involved in exocytosis. The chain is Annexin A4 (ANXA4) from Sus scrofa (Pig).